A 257-amino-acid polypeptide reads, in one-letter code: uncharacterized protein (257 aa).

The chain crosses the membrane as a helical span at residues 7–27; sequence LFLCVSFLLITIFIGGGGFMN.

Belongs to the staphylococcal tandem lipoprotein family.

The protein localises to the cell membrane. This is an uncharacterized protein from Staphylococcus epidermidis (strain ATCC 12228 / FDA PCI 1200).